Consider the following 937-residue polypeptide: uncharacterized protein (937 aa).

At Thr2 the chain carries N-acetylthreonine. Positions 281–937 (NESPSSNINT…KKGKGKGGRK (657 aa)) are disordered. A compositionally biased stretch (low complexity) spans 290 to 308 (TTTTSTTTTTTTTTSSPVV). Thr292 (charge relay system) is an active-site residue. Basic and acidic residues-rich tracts occupy residues 309–402 (EESK…EKQQ), 411–431 (AEKE…RLEA), 469–489 (AEKE…KLEA), 512–532 (AEKE…KLEA), 600–615 (AEKE…KLEA), 667–687 (AEKE…KLEA), 738–758 (AEKE…RLEA), and 780–872 (AEKE…KVEE). Positions 345 to 802 (VDDSKEKEEK…KAAEETKVEE (458 aa)) form a coiled coil. Positions 887 to 897 (EETEEGEEVDE) are enriched in acidic residues. The span at 898-924 (ASNTTTEQTTTNANQPKKPNNNNNNNK) shows a compositional bias: low complexity. A compositionally biased stretch (basic residues) spans 925-937 (GKGKKGKGKGGRK).

It belongs to the AB hydrolase superfamily.

This is an uncharacterized protein from Dictyostelium discoideum (Social amoeba).